The sequence spans 531 residues: Polypyrimidine tract-binding protein 2 (531 aa).

Residue Met-1 is modified to N-acetylmethionine. Ser-26 and Ser-27 each carry phosphoserine. RRM domains follow at residues 59 to 133 (RVLH…YSNH) and 181 to 257 (LRII…FSKL). Phosphoserine is present on Ser-308. RRM domains lie at 338 to 412 (TVLL…LSKH) and 455 to 529 (ATLH…FSKS).

Monomer. Interacts with NOVA1; the interaction is direct. Identified in a mRNP complex, at least composed of DHX9, DDX3X, ELAVL1, HNRNPU, IGF2BP1, ILF3, PABPC1, PCBP2, PTBP2, STAU1, STAU2, SYNCRIP and YBX1. Part of a ternary complex containing KHSRP and HNRPH1. Interacts with NOVA2; the interaction is direct. In terms of tissue distribution, mainly expressed in brain although also detected in other tissues like heart and skeletal muscle. Isoform 1 and isoform 2 are specifically expressed in neuronal tissues. Isoform 3 and isoform 4 are expressed in non-neuronal tissues. Isoform 5 and isoform 6 are truncated forms expressed in non-neuronal tissues.

Its subcellular location is the nucleus. Its function is as follows. RNA-binding protein which binds to intronic polypyrimidine tracts and mediates negative regulation of exons splicing. May antagonize in a tissue-specific manner the ability of NOVA1 to activate exon selection. In addition to its function in pre-mRNA splicing, plays also a role in the regulation of translation. Reduced affinity for RNA. The chain is Polypyrimidine tract-binding protein 2 from Homo sapiens (Human).